The following is a 1116-amino-acid chain: MLKLFTKLFGTKSERDLKSIRPYVEKINLEYEKLVSLTNDELRKKTDSLKQYIKVETQEFIGELEIRERQLEATTQLTPKEVEDLYIQISRIKEQYNTQLEKVLLDILPQAFAIVKETARRFKENEQLIVTATGYDRELAITEKHIDIEGDQAIWKNQWEVTGHLLTWDMVHYDEQLIGGVILHKGKIAEMATGEGKTLVATLPTFLNALVGKGVHIVTVNEYLAKRDAAWMKPIYQFHGFTVACIEETSPYSAARREAYQADITYGTNNEFGFDYLRDNMASQQEEVVQREHHYAIVDEVDSVLIDDARTPLIISGPVEKGNEQEYITFNPRIKRLYEAQKQIVNQFLQEAKSQMVAGKNDEAGLPLFRAYRGLPKYKPLIKYLSEPGVKQLLHKTENYYIQDNSRMMPEADEPLLFTIDEKHNTVELTEKGLEYITQQGEDPDFFILPDTATAVGEIESDAGLDNLEKEQKKQILAQEYAIKSQRIHAVQQLLKAYALFEKDIDYILVDGKAKIVDEQTGRVLEGRRYSDGLHQAIEAKEEIKIEKASQTYATITLQNYFRLYHKLAGMTGTAETEAGEFYDIYHLDVVVTPTHKPVVREDKDDKVYKTVREKFNAIIEEITVLANQGRPVLVGTTSVEISELVSKMLNLRKIKHQVLNAKHHQKEAEIVAEAGKPGTVTIATNMAGRGTDIKLSPEAKAAGGLAIIGTERHESRRVDRQLRGRAGRQGDVGSSQFFVSLEDSLMRLFISDRIAKIMDSLGLKEGEMIQHSMITRSIERAQKKVEQNNYAYRKRLLEYDNELNKQREIIYRRRRDALLGHRLGAEVNAMLFEVAKSSVMQQGVKANYHVLATKFSYITGTLPPITEEEFHTYDIQKITDIIYQAFLSSYMNRLAVFKEQGIAVQMNLPDHIADIRAEYLSFSFSDSERRLEVPVKIADFMDNAGEAILKSLERVAIIYYLDRYWQEHLRYMDELRHSVQNASYEQKDPLLIYKFESYALFSTMIARANESIITYLLKANLLLYKASDEKPKMVEKNKRIELEESKQDIISLLRERASNSSEEILKPQPIKSQKIANRNERVTVQYEDGTIKENVKFKSVEEDIANGKCILLETR.

ATP is bound by residues glutamine 176, 194-198 (GEGKT), and aspartate 693.

Belongs to the SecA family. In terms of assembly, monomer and homodimer. Part of the essential Sec protein translocation apparatus which comprises SecA, SecYEG and auxiliary proteins SecDF. Other proteins may also be involved.

The protein localises to the cell inner membrane. The protein resides in the cytoplasm. The catalysed reaction is ATP + H2O + cellular proteinSide 1 = ADP + phosphate + cellular proteinSide 2.. Its function is as follows. Part of the Sec protein translocase complex. Interacts with the SecYEG preprotein conducting channel. Has a central role in coupling the hydrolysis of ATP to the transfer of proteins into and across the cell membrane, serving as an ATP-driven molecular motor driving the stepwise translocation of polypeptide chains across the membrane. In Amoebophilus asiaticus (strain 5a2), this protein is Protein translocase subunit SecA.